Here is a 232-residue protein sequence, read N- to C-terminus: V-type ATP synthase subunit E (232 aa).

The protein belongs to the V-ATPase E subunit family.

Its function is as follows. Produces ATP from ADP in the presence of a proton gradient across the membrane. The chain is V-type ATP synthase subunit E (atpE) from Treponema pallidum (strain Nichols).